Consider the following 530-residue polypeptide: Zinc finger protein ZIC 4 (530 aa).

Composition is skewed to basic residues over residues 31-40 (HHPHHHHHPP) and 97-113 (NPHH…HHMA). Disordered regions lie at residues 31-50 (HHPH…TGYP) and 87-138 (PGAL…SYSS). The C2H2-type 1; atypical zinc-finger motif lies at 284 to 317 (LICKWIEEDQLPKKLCSKTFSTMHELVTHVTVEH). The C2H2-type 2; atypical zinc finger occupies 326 to 353 (HICFWEECPREGKPFKAKYKLVNHIRVH). 3 C2H2-type zinc fingers span residues 359-383 (FPCP…KRTH), 389-413 (FKCE…SHVH), and 419-443 (YNCK…MKVH). Residues 432–530 (HPSSLRKHMK…YSNWQATNTF (99 aa)) are disordered. The span at 435 to 444 (SLRKHMKVHC) shows a compositional bias: basic residues. Low complexity-rich tracts occupy residues 455–467 (SSIP…SSDS) and 474–485 (TSSQPEPPTSSQ). The segment covering 520-530 (SYSNWQATNTF) has biased composition (polar residues).

The protein belongs to the GLI C2H2-type zinc-finger protein family. As to expression, at mid-gastrula stage (stage 11.5), weakly expressed in the prospective neural fold. Expressed in the neural plate border region at early neurula stage (stage 15) with strongest expression in the prospective regions of the hyoid and branchial crests. Expression in the dorsal central nervous system (CNS) continues through late neurula stage and early tail bud stages with expression strongest in the olfactory placode and expression levels increasing as development progresses. Becomes expressed in somites.

It localises to the nucleus. Functionally, may bind to DNA. Induces neural and neural crest differentiation. Does not induce anterior neural tissue. In Xenopus laevis (African clawed frog), this protein is Zinc finger protein ZIC 4 (zic4).